A 290-amino-acid chain; its full sequence is HTH-type transcriptional activator RhaR (290 aa).

Residues 179 to 277 (DLIMSALQQS…GMTPRDYRQR (99 aa)) form the HTH araC/xylS-type domain. DNA-binding regions (H-T-H motif) lie at residues 196-217 (ADFC…RQQT) and 244-267 (ISDI…TREA).

In terms of assembly, binds DNA as a dimer.

It is found in the cytoplasm. Its function is as follows. Activates expression of the rhaSR operon in response to L-rhamnose. The sequence is that of HTH-type transcriptional activator RhaR from Yersinia pseudotuberculosis serotype O:1b (strain IP 31758).